The following is a 462-amino-acid chain: Argininosuccinate lyase (462 aa).

It belongs to the lyase 1 family. Argininosuccinate lyase subfamily.

The protein localises to the cytoplasm. It carries out the reaction 2-(N(omega)-L-arginino)succinate = fumarate + L-arginine. The protein operates within amino-acid biosynthesis; L-arginine biosynthesis; L-arginine from L-ornithine and carbamoyl phosphate: step 3/3. The protein is Argininosuccinate lyase of Bacillus anthracis (strain A0248).